The chain runs to 682 residues: DNA-directed RNA polymerase subunit beta' (682 aa).

Residues Cys69, Cys71, Cys87, and Cys90 each contribute to the Zn(2+) site. The Mg(2+) site is built by Asp489, Asp491, and Asp493.

The protein belongs to the RNA polymerase beta' chain family. RpoC1 subfamily. In plastids the minimal PEP RNA polymerase catalytic core is composed of four subunits: alpha, beta, beta', and beta''. When a (nuclear-encoded) sigma factor is associated with the core the holoenzyme is formed, which can initiate transcription. Mg(2+) is required as a cofactor. It depends on Zn(2+) as a cofactor.

Its subcellular location is the plastid. The protein resides in the chloroplast. It carries out the reaction RNA(n) + a ribonucleoside 5'-triphosphate = RNA(n+1) + diphosphate. DNA-dependent RNA polymerase catalyzes the transcription of DNA into RNA using the four ribonucleoside triphosphates as substrates. The polypeptide is DNA-directed RNA polymerase subunit beta' (Acorus calamus var. americanus (American sweet flag)).